Reading from the N-terminus, the 607-residue chain is tRNA uridine 5-carboxymethylaminomethyl modification enzyme MnmG (607 aa).

Residues Gly11–Gly16, Val123, and Ser178 contribute to the FAD site. Position 270-284 (Gly270–Phe284) interacts with NAD(+). Gln367 serves as a coordination point for FAD.

This sequence belongs to the MnmG family. As to quaternary structure, homodimer. Heterotetramer of two MnmE and two MnmG subunits. The cofactor is FAD.

Its subcellular location is the cytoplasm. NAD-binding protein involved in the addition of a carboxymethylaminomethyl (cmnm) group at the wobble position (U34) of certain tRNAs, forming tRNA-cmnm(5)s(2)U34. The sequence is that of tRNA uridine 5-carboxymethylaminomethyl modification enzyme MnmG from Metamycoplasma arthritidis (strain 158L3-1) (Mycoplasma arthritidis).